A 261-amino-acid chain; its full sequence is tRNA pseudouridine synthase A 2 (261 aa).

D59 serves as the catalytic Nucleophile. Substrate is bound at residue Y117.

This sequence belongs to the tRNA pseudouridine synthase TruA family. Homodimer.

The catalysed reaction is uridine(38/39/40) in tRNA = pseudouridine(38/39/40) in tRNA. Formation of pseudouridine at positions 38, 39 and 40 in the anticodon stem and loop of transfer RNAs. This Desulfotalea psychrophila (strain LSv54 / DSM 12343) protein is tRNA pseudouridine synthase A 2.